The sequence spans 162 residues: Iron-sulfur cluster assembly protein IscU (162 aa).

This sequence belongs to the NifU family. Homotrimer. Small proportion is monomeric. Interacts with IscS. Interacts with ABCB6. Component of a complex, at least composed of IscS, Isd11 and IscU. [4Fe-4S] cluster serves as cofactor.

It is found in the mitochondrion. It participates in cofactor biosynthesis; iron-sulfur cluster biosynthesis. Participates in iron-sulfur cluster formation (ISC) pathway for iron-sulfur (Fe-S) cluster biogenesis. Plays a role of a major scaffold protein for [Fe-S] assembly; assembles [4Fe-4S] clusters directly upon interaction with the catalytic component IscS-Isd11 as part of the scaffold complex. Can transfer [4Fe-4S] clusters to target apo-proteins. The sequence is that of Iron-sulfur cluster assembly protein IscU from Plasmodium falciparum (isolate 3D7).